The sequence spans 70 residues: Protein SlyX homolog (70 aa).

It belongs to the SlyX family.

This chain is Protein SlyX homolog, found in Agrobacterium fabrum (strain C58 / ATCC 33970) (Agrobacterium tumefaciens (strain C58)).